The primary structure comprises 314 residues: BCL2/adenovirus E1B 19 kDa protein-interacting protein 2 (314 aa).

The interval 1-21 (MEGVELKEEWQDEDFPIPLPE) is disordered. The segment covering 10 to 21 (WQDEDFPIPLPE) has biased composition (acidic residues). Residues S41 and S77 each carry the phosphoserine modification. Positions 76–100 (ESGEIDLDGLDTPSENSNEFEWEDD) are disordered. The residue at position 87 (T87) is a Phosphothreonine. Phosphoserine is present on residues S89, S92, and S114. A CRAL-TRIO domain is found at 147–304 (IEPYKKVISH…CIKQVDQELN (158 aa)).

The protein resides in the cytoplasm. It is found in the perinuclear region. Functionally, implicated in the suppression of cell death. Interacts with the BCL-2 and adenovirus E1B 19 kDa proteins. The sequence is that of BCL2/adenovirus E1B 19 kDa protein-interacting protein 2 (BNIP2) from Homo sapiens (Human).